We begin with the raw amino-acid sequence, 248 residues long: tRNA pseudouridine synthase A (248 aa).

The active-site Nucleophile is the D53. Y111 contacts substrate.

This sequence belongs to the tRNA pseudouridine synthase TruA family. Homodimer.

It carries out the reaction uridine(38/39/40) in tRNA = pseudouridine(38/39/40) in tRNA. Functionally, formation of pseudouridine at positions 38, 39 and 40 in the anticodon stem and loop of transfer RNAs. The sequence is that of tRNA pseudouridine synthase A from Listeria welshimeri serovar 6b (strain ATCC 35897 / DSM 20650 / CCUG 15529 / CIP 8149 / NCTC 11857 / SLCC 5334 / V8).